Consider the following 417-residue polypeptide: Gamma-glutamyl phosphate reductase (417 aa).

It belongs to the gamma-glutamyl phosphate reductase family.

It localises to the cytoplasm. The enzyme catalyses L-glutamate 5-semialdehyde + phosphate + NADP(+) = L-glutamyl 5-phosphate + NADPH + H(+). It functions in the pathway amino-acid biosynthesis; L-proline biosynthesis; L-glutamate 5-semialdehyde from L-glutamate: step 2/2. In terms of biological role, catalyzes the NADPH-dependent reduction of L-glutamate 5-phosphate into L-glutamate 5-semialdehyde and phosphate. The product spontaneously undergoes cyclization to form 1-pyrroline-5-carboxylate. This Streptococcus agalactiae serotype III (strain NEM316) protein is Gamma-glutamyl phosphate reductase.